The chain runs to 213 residues: Pyridoxine/pyridoxamine 5'-phosphate oxidase (213 aa).

Substrate-binding positions include 9–12 and Lys-67; that span reads RKDY. FMN contacts are provided by residues 62–67, 77–78, Arg-83, Lys-84, and Gln-106; these read RIVLLK and FT. Positions 124, 128, and 132 each coordinate substrate. FMN is bound by residues 141 to 142 and Trp-186; that span reads QS. 192–194 is a binding site for substrate; it reads RLH. Residue Arg-196 coordinates FMN.

Belongs to the pyridoxamine 5'-phosphate oxidase family. In terms of assembly, homodimer. The cofactor is FMN.

It catalyses the reaction pyridoxamine 5'-phosphate + O2 + H2O = pyridoxal 5'-phosphate + H2O2 + NH4(+). The catalysed reaction is pyridoxine 5'-phosphate + O2 = pyridoxal 5'-phosphate + H2O2. It participates in cofactor metabolism; pyridoxal 5'-phosphate salvage; pyridoxal 5'-phosphate from pyridoxamine 5'-phosphate: step 1/1. The protein operates within cofactor metabolism; pyridoxal 5'-phosphate salvage; pyridoxal 5'-phosphate from pyridoxine 5'-phosphate: step 1/1. Functionally, catalyzes the oxidation of either pyridoxine 5'-phosphate (PNP) or pyridoxamine 5'-phosphate (PMP) into pyridoxal 5'-phosphate (PLP). This Cyanothece sp. (strain PCC 7425 / ATCC 29141) protein is Pyridoxine/pyridoxamine 5'-phosphate oxidase.